The following is a 168-amino-acid chain: PTS system glucose-specific EIIA component (168 aa).

One can recognise a PTS EIIA type-1 domain in the interval 38-142 (DEVFSNKIVG…STLTPVIISN (105 aa)). 2 residues coordinate Zn(2+): H75 and H90. The active-site Tele-phosphohistidine intermediate; for EIIA activity is H90. Phosphohistidine; by HPr is present on H90.

The cofactor is Zn(2+).

It localises to the cytoplasm. Functionally, the phosphoenolpyruvate-dependent sugar phosphotransferase system (sugar PTS), a major carbohydrate active transport system, catalyzes the phosphorylation of incoming sugar substrates concomitantly with their translocation across the cell membrane. The enzyme II complex composed of PtsG and Crr is involved in glucose transport. The protein is PTS system glucose-specific EIIA component (crr) of Buchnera aphidicola subsp. Baizongia pistaciae (strain Bp).